The following is a 959-amino-acid chain: Bifunctional premutilin synthase (959 aa).

Residues Met-1–Asp-542 form a class II diterpene cyclase region. The short motif at Asp-309–Met-312 is the DXDD motif element. Asp-311 functions as the For class II diterpene cyclase activity in the catalytic mechanism. The class I diterpene synthase stretch occupies residues Pro-543–His-959. Asp-649 acts as the For class I diterpene synthase activity in catalysis. Residues Asp-649, Asp-653, and Asn-824 each coordinate Mg(2+). The DDXXD motif motif lies at Asp-649–Asp-653. The tract at residues Lys-931–His-959 is disordered. The segment covering Asn-934–His-959 has biased composition (low complexity).

It belongs to the terpene synthase family. Mg(2+) is required as a cofactor.

The protein operates within secondary metabolite biosynthesis; terpenoid biosynthesis. Its function is as follows. Bifunctional premutilin synthase; part of the gene cluster that mediates the biosynthesis of pleuromutilin, a tricyclic diterpene showing antibacterial properties. The geranylgeranyl diphosphate (GGPP) synthase ple4 catalyzes the first step in pleuromutilin biosynthesis. GGPP is then substrate of the premutilin synthase (PS) ple3 to yield premutilin. Premutilin synthase is a bifunctional enzyme composed of the fusion of a class II diterpene cyclase (DTC) and a class I diterpene synthase (DTS), with the corresponding domains and active sites containing characteristic aspartate-rich motifs. GGPP is first converted to mutildienyl-diphosphate (MPP) at the class II DTC site. MPP is subsequently further cyclized at the class I DTS site, followed by a 1,5-hydride shift and addition of water prior to terminating deprotonation, to yield premutilin. The cytochrome P450 monooxygenases ple5 and ple6 hydroxylate premutilin at C-11 and C-3, respectively, producing 11-hydroxypremutilin and 3-hydroxypremutilin. The combination of the actions of both ple5 and ple6 leads to the production of 3,11-dihydroxypremutilin. The short chain dehydrogenase ple7 further converts 3,11-dihydroxypremutilin into mutilin. The acetyltransferase ple2 then acetylates mutilin to produce 14-O-acetylmutilin. Finally, the cytochrome P450 monooxygenase ple1 catalyzes hydroxylation on the alpha position of the acetyl side chain of 14-O-acetylmutilin to yield pleuromutilin. This is Bifunctional premutilin synthase from Rhodocybe pseudopiperita (Clitopilus pseudopiperitus).